The chain runs to 359 residues: Histidinol-phosphate aminotransferase (359 aa).

Position 217 is an N6-(pyridoxal phosphate)lysine (K217).

The protein belongs to the class-II pyridoxal-phosphate-dependent aminotransferase family. Histidinol-phosphate aminotransferase subfamily. Homodimer. The cofactor is pyridoxal 5'-phosphate.

It carries out the reaction L-histidinol phosphate + 2-oxoglutarate = 3-(imidazol-4-yl)-2-oxopropyl phosphate + L-glutamate. It participates in amino-acid biosynthesis; L-histidine biosynthesis; L-histidine from 5-phospho-alpha-D-ribose 1-diphosphate: step 7/9. This chain is Histidinol-phosphate aminotransferase, found in Salmonella enteritidis PT4 (strain P125109).